The primary structure comprises 292 residues: Calponin-1 (292 aa).

Residues 28–131 (PQTERQLRVW…STLIALASQA (104 aa)) enclose the Calponin-homology (CH) domain. Calponin-like repeat units follow at residues 164 to 189 (IGLQ…RHLY), 204 to 229 (ISLQ…RQIF), and 243 to 268 (IGLQ…RQVY). At threonine 170 the chain carries Phosphothreonine; by ROCK2. Phosphoserine; by PKC, CaMK2 and ROCK2 is present on serine 175. Phosphothreonine; by ROCK2 occurs at positions 180 and 184. The residue at position 184 (threonine 184) is a Phosphothreonine; by PKC and CaMK2. The segment at 185–193 (RRHLYDPKL) is calmodulin-binding. Residue threonine 259 is modified to Phosphothreonine; by ROCK2.

This sequence belongs to the calponin family. In terms of processing, phosphorylation by PKC or CaM kinase II reduces the binding of calponin to F-actin and tropomyosin. Smooth muscle, and tissues containing significant amounts of smooth muscle.

Its function is as follows. Thin filament-associated protein that is implicated in the regulation and modulation of smooth muscle contraction. It is capable of binding to actin, calmodulin and tropomyosin. The interaction of calponin with actin inhibits the actomyosin Mg-ATPase activity. This is Calponin-1 (CNN1) from Gallus gallus (Chicken).